Consider the following 265-residue polypeptide: Undecaprenyl-diphosphatase 1 (265 aa).

7 helical membrane passes run 4-24 (IIIA…PISS), 42-62 (AKTF…ILYH), 84-104 (FHVF…HDVI), 108-128 (LFQP…MILA), 184-204 (SEFS…LDLL), 217-237 (MFAV…VTFL), and 245-265 (LKPF…FVLL).

This sequence belongs to the UppP family.

The protein resides in the cell membrane. It catalyses the reaction di-trans,octa-cis-undecaprenyl diphosphate + H2O = di-trans,octa-cis-undecaprenyl phosphate + phosphate + H(+). In terms of biological role, catalyzes the dephosphorylation of undecaprenyl diphosphate (UPP). Confers resistance to bacitracin. In Bacillus cereus (strain ZK / E33L), this protein is Undecaprenyl-diphosphatase 1.